We begin with the raw amino-acid sequence, 470 residues long: MSTNEGSLWGGRFAGGPSDALAALSKSTHFDWVLAPYDLTASRAHTMVLFRAGLLTEEQRDGLLAGLDSLAQDVADGSFGPLVTDEDVHAALERGLIDRVGPDLGGRLRAGRSRNDQVAALFRMWLRDAVRRVATGVLDVVGALAEQAAAHPSAIMPGKTHLQSAQPILLAHHLLAHAHPLLRDLDRIVDFDKRAAVSPYGSGALAGSSLGLDPDAIAADLGFSAAADNSVDATAARDFAAEAAFVFAMIAVDLSRLAEDIIVWSSTEFGYVTLHDSWSTGSSIMPQKKNPDIAELARGKSGRLIGNLAGLLATLKAQPLAYNRDLQEDKEPVFDSVAQLELLLPAMAGLVASLTFNVQRMAELAPAGYTLATDLAEWLVRQGVPFRSAHEAAGAAVRAAEQRGVGLQELTDDELAAISPELTPQVREVLTIEGSVSARDCRGGTAPGRVAEQLNAIGEAAERLRRQLVR.

It belongs to the lyase 1 family. Argininosuccinate lyase subfamily.

Its subcellular location is the cytoplasm. The catalysed reaction is 2-(N(omega)-L-arginino)succinate = fumarate + L-arginine. It participates in amino-acid biosynthesis; L-arginine biosynthesis; L-arginine from L-ornithine and carbamoyl phosphate: step 3/3. The polypeptide is Argininosuccinate lyase (Mycobacterium tuberculosis (strain ATCC 25618 / H37Rv)).